We begin with the raw amino-acid sequence, 519 residues long: Bifunctional NAD(P)H-hydrate repair enzyme Nnr (519 aa).

Positions 1 to 233 (MMRCGEGYPG…DIGIPPAAEI (233 aa)) are NAD(P)H-hydrate epimerase. One can recognise a YjeF N-terminal domain in the interval 25 to 233 (MAAADINAEY…DIGIPPAAEI (209 aa)). An NADPHX 1; for epimerase activity region spans residues 71 to 75 (GNGGD). K(+) contacts are provided by asparagine 72 and aspartate 144. The tract at residues 148–154 (GTGVRGS) is NADPHX 1; for epimerase activity. Aspartate 177 serves as a coordination point for (6S)-NADPHX. Serine 180 provides a ligand contact to K(+). One can recognise a YjeF C-terminal domain in the interval 235–515 (MGPGDLLRIP…DMIPSVMDPG (281 aa)). The interval 235 to 519 (MGPGDLLRIP…SVMDPGFYGF (285 aa)) is ADP-dependent (S)-NAD(P)H-hydrate dehydratase. Glycine 338 contributes to the (6S)-NADPHX binding site. Positions 389–395 (HMAEFSS) are NADPHX 2; for dehydratase activity. ADP is bound by residues 428-432 (KGRID) and 447-456 (CPGMTVGGTG). Aspartate 457 contributes to the (6S)-NADPHX binding site.

It in the N-terminal section; belongs to the NnrE/AIBP family. This sequence in the C-terminal section; belongs to the NnrD/CARKD family. The cofactor is K(+).

It carries out the reaction (6S)-NADHX + ADP = AMP + phosphate + NADH + H(+). The enzyme catalyses (6S)-NADPHX + ADP = AMP + phosphate + NADPH + H(+). It catalyses the reaction (6R)-NADHX = (6S)-NADHX. The catalysed reaction is (6R)-NADPHX = (6S)-NADPHX. Bifunctional enzyme that catalyzes the epimerization of the S- and R-forms of NAD(P)HX and the dehydration of the S-form of NAD(P)HX at the expense of ADP, which is converted to AMP. This allows the repair of both epimers of NAD(P)HX, a damaged form of NAD(P)H that is a result of enzymatic or heat-dependent hydration. This chain is Bifunctional NAD(P)H-hydrate repair enzyme Nnr (nnr), found in Methanothermobacter thermautotrophicus (strain ATCC 29096 / DSM 1053 / JCM 10044 / NBRC 100330 / Delta H) (Methanobacterium thermoautotrophicum).